The sequence spans 508 residues: Histidine ammonia-lyase (508 aa).

Positions 143–145 form a cross-link, 5-imidazolinone (Ala-Gly); that stretch reads ASG. S144 is subject to 2,3-didehydroalanine (Ser).

Belongs to the PAL/histidase family. Contains an active site 4-methylidene-imidazol-5-one (MIO), which is formed autocatalytically by cyclization and dehydration of residues Ala-Ser-Gly.

The protein resides in the cytoplasm. The catalysed reaction is L-histidine = trans-urocanate + NH4(+). It participates in amino-acid degradation; L-histidine degradation into L-glutamate; N-formimidoyl-L-glutamate from L-histidine: step 1/3. The protein is Histidine ammonia-lyase of Klebsiella pneumoniae subsp. pneumoniae (strain ATCC 700721 / MGH 78578).